Reading from the N-terminus, the 357-residue chain is NADPH HC-toxin reductase 1 (357 aa).

Residues R40, K47, D68–L69, V88–T90, Y178, K182, L207–V210, and T222 contribute to the NADP(+) site. The Proton donor role is filled by K182.

It belongs to the NAD(P)-dependent epimerase/dehydratase family.

Its activity is regulated as follows. Activity is sensitive to heat, dependent on NADPH, and inhibited by p-hydroxymercuribenzoate and disulfiram. Its function is as follows. In tandem with Hm2, NADPH-dependent Helminthosporium carbonum (HC) toxin reductase (HCTR), which inactivates HC toxin, a cyclic tetrapeptide produced by the fungus Cochliobolus carbonum to permit infection and acting as an inhibitor of host histone deacetylases (HDACs), thus conferring resistance against C.carbonum race 1 in resistant cultivars (e.g. cv. B73 and cv. Wisconsin 22). Catalyzes the production of 8-hydroxy derivative of HC-toxin via the reduction of the 8-keto group of 2-amino-9,10-epoxy-8-oxo-decanoic acid, an amino acid of the HC-toxin. The polypeptide is NADPH HC-toxin reductase 1 (Zea mays (Maize)).